The chain runs to 399 residues: Alpha-ketoglutarate-dependent dioxygenase fc-dox (399 aa).

2 residues coordinate Fe cation: histidine 158 and aspartate 160. A 2-oxoglutarate-binding site is contributed by threonine 203. Histidine 355 lines the Fe cation pocket. Position 367 (arginine 367) interacts with 2-oxoglutarate. Residues 371-399 (QGWLAGDRPPKGPVPIPDPRARSSIYYQK) form a disordered region.

Belongs to the TfdA dioxygenase family. Fe(2+) serves as cofactor.

It functions in the pathway mycotoxin biosynthesis. Alpha-ketoglutarate-dependent dioxygenase; part of the 2 gene clusters that mediate the biosynthesis of fusicoccins, diterpene glucosides that display phytohormone-like activity and function as potent activators of plasma membrane H(+)-ATPases in plants by modifying 14-3-3 proteins and cause the plant disease constriction canker. The first step in the pathway is performed by the fusicoccadiene synthase PaFS that possesses both prenyl transferase and terpene cyclase activity, converting isopentenyl diphosphate and dimethylallyl diphosphate into geranylgeranyl diphosphate (GGDP) and successively converting GGDP into fusicocca-2,10(14)-diene, a precursor for fusicoccin H. The second step is the oxidation at the C-8 position by the cytochrome P450 monooxygenase PaP450-2 to yield fusicocca-2,10(14)-diene-8-beta-ol. The cytochrome P450 monooxygenase PaP450-1 then catalyzes the hydroxylation at the C-16 position to produce fusicocca-2,10(14)-diene-8-beta,16-diol. The dioxygenase fc-dox then catalyzes the 16-oxydation of fusicocca-2,10(14)-diene-8-beta,16-diol to yield an aldehyde (8-beta-hydroxyfusicocca-1,10(14)-dien-16-al). The short-chain dehydrogenase/reductase fc-sdr catalyzes the reduction of the aldehyde to yield fusicocca-1,10(14)-diene-8-beta,16-diol. The next step is the hydroxylation at C-9 performed by the cytochrome P450 monooxygenase PaP450-3 that leads to fusicoccin H aglycon which is glycosylated to fusicoccin H by the O-glycosyltransferase PaGT. Hydroxylation at C-12 by the cytochrome P450 monooxygenase PaP450-4 leads then to the production of fusicoccin Q and is followed by methylation by the O-methyltransferase PaMT to yield fusicoccin P. Fusicoccin P is further converted to fusicoccin J via prenylation by the O-glucose prenyltransferase PaPT. Cytochrome P450 monooxygenase PaP450-5 then performs hydroxylation at C-19 to yield dideacetyl-fusicoccin A which is acetylated to 3'-O-deacetyl-fusicoccin A by the O-acetyltransferase PaAT-2. Finally, a another acetylation by the O-acetyltransferase PaAT-1 yields fusicoccin A. The polypeptide is Alpha-ketoglutarate-dependent dioxygenase fc-dox (Phomopsis amygdali (Fusicoccum amygdali)).